A 237-amino-acid chain; its full sequence is Ubiquinone biosynthesis O-methyltransferase (237 aa).

The S-adenosyl-L-methionine site is built by R38, G58, D79, and M124.

This sequence belongs to the methyltransferase superfamily. UbiG/COQ3 family.

It catalyses the reaction a 3-demethylubiquinol + S-adenosyl-L-methionine = a ubiquinol + S-adenosyl-L-homocysteine + H(+). The catalysed reaction is a 3-(all-trans-polyprenyl)benzene-1,2-diol + S-adenosyl-L-methionine = a 2-methoxy-6-(all-trans-polyprenyl)phenol + S-adenosyl-L-homocysteine + H(+). Its pathway is cofactor biosynthesis; ubiquinone biosynthesis. Its function is as follows. O-methyltransferase that catalyzes the 2 O-methylation steps in the ubiquinone biosynthetic pathway. The polypeptide is Ubiquinone biosynthesis O-methyltransferase (Acinetobacter baumannii (strain ACICU)).